Here is a 462-residue protein sequence, read N- to C-terminus: Cysteine--tRNA ligase (462 aa).

Zn(2+) is bound at residue C24. The 'HIGH' region signature appears at 26 to 36 (PTVYDDAHLGH). The Zn(2+) site is built by C199, H224, and E228. The short motif at 256 to 260 (KMSKS) is the 'KMSKS' region element. K259 serves as a coordination point for ATP.

The protein belongs to the class-I aminoacyl-tRNA synthetase family. As to quaternary structure, monomer. The cofactor is Zn(2+).

Its subcellular location is the cytoplasm. The enzyme catalyses tRNA(Cys) + L-cysteine + ATP = L-cysteinyl-tRNA(Cys) + AMP + diphosphate. The polypeptide is Cysteine--tRNA ligase (cysS) (Campylobacter jejuni subsp. jejuni serotype O:2 (strain ATCC 700819 / NCTC 11168)).